We begin with the raw amino-acid sequence, 466 residues long: Glutamate--tRNA ligase 2 (466 aa).

Positions 9–19 match the 'HIGH' region motif; sequence PSPTGSLHLGG. Residues 236–240 carry the 'KMSKS' region motif; the sequence is KLSKR. ATP is bound at residue Lys-239.

It belongs to the class-I aminoacyl-tRNA synthetase family. Glutamate--tRNA ligase type 1 subfamily. Monomer.

It is found in the cytoplasm. It catalyses the reaction tRNA(Glu) + L-glutamate + ATP = L-glutamyl-tRNA(Glu) + AMP + diphosphate. Its function is as follows. Catalyzes the attachment of glutamate to tRNA(Glu) in a two-step reaction: glutamate is first activated by ATP to form Glu-AMP and then transferred to the acceptor end of tRNA(Glu). This is Glutamate--tRNA ligase 2 from Anaplasma marginale (strain St. Maries).